A 327-amino-acid polypeptide reads, in one-letter code: Malate dehydrogenase (327 aa).

11-17 (GAAGNIS) contributes to the NAD(+) binding site. Positions 92 and 98 each coordinate substrate. NAD(+) contacts are provided by residues Asn-105, Gln-112, and 129-131 (VGN). The substrate site is built by Asn-131 and Arg-162. The Proton acceptor role is filled by His-187. Residues 304–327 (SQEKMKATEQELSEERDAVEHLLP) are disordered.

The protein belongs to the LDH/MDH superfamily. MDH type 2 family.

The catalysed reaction is (S)-malate + NAD(+) = oxaloacetate + NADH + H(+). In terms of biological role, catalyzes the reversible oxidation of malate to oxaloacetate. The polypeptide is Malate dehydrogenase (Psychrobacter sp. (strain PRwf-1)).